We begin with the raw amino-acid sequence, 360 residues long: S-adenosylmethionine:tRNA ribosyltransferase-isomerase (360 aa).

This sequence belongs to the QueA family. Monomer.

It is found in the cytoplasm. The enzyme catalyses 7-aminomethyl-7-carbaguanosine(34) in tRNA + S-adenosyl-L-methionine = epoxyqueuosine(34) in tRNA + adenine + L-methionine + 2 H(+). It functions in the pathway tRNA modification; tRNA-queuosine biosynthesis. In terms of biological role, transfers and isomerizes the ribose moiety from AdoMet to the 7-aminomethyl group of 7-deazaguanine (preQ1-tRNA) to give epoxyqueuosine (oQ-tRNA). This chain is S-adenosylmethionine:tRNA ribosyltransferase-isomerase, found in Burkholderia pseudomallei (strain 1106a).